Here is a 279-residue protein sequence, read N- to C-terminus: Tryptophan synthase alpha chain (279 aa).

Active-site proton acceptor residues include glutamate 49 and aspartate 60.

Belongs to the TrpA family. In terms of assembly, tetramer of two alpha and two beta chains.

The catalysed reaction is (1S,2R)-1-C-(indol-3-yl)glycerol 3-phosphate + L-serine = D-glyceraldehyde 3-phosphate + L-tryptophan + H2O. It participates in amino-acid biosynthesis; L-tryptophan biosynthesis; L-tryptophan from chorismate: step 5/5. Functionally, the alpha subunit is responsible for the aldol cleavage of indoleglycerol phosphate to indole and glyceraldehyde 3-phosphate. This is Tryptophan synthase alpha chain from Nitrosospira multiformis (strain ATCC 25196 / NCIMB 11849 / C 71).